A 185-amino-acid polypeptide reads, in one-letter code: Ribosome-recycling factor (185 aa).

It belongs to the RRF family.

The protein resides in the cytoplasm. Its function is as follows. Responsible for the release of ribosomes from messenger RNA at the termination of protein biosynthesis. May increase the efficiency of translation by recycling ribosomes from one round of translation to another. The polypeptide is Ribosome-recycling factor (Histophilus somni (strain 2336) (Haemophilus somnus)).